Here is a 189-residue protein sequence, read N- to C-terminus: Ras-like protein 1 (189 aa).

10–17 (GAGGVGKS) contacts GTP. The Effector region signature appears at 32–40 (YDPTIEDSY). GTP-binding positions include 57–61 (DTAGQ) and 116–119 (NKCD). Cysteine 186 carries the cysteine methyl ester modification. Cysteine 186 carries S-geranylgeranyl cysteine lipidation. Positions 187-189 (KIL) are cleaved as a propeptide — removed in mature form.

The protein belongs to the small GTPase superfamily. Ras family.

The protein localises to the cell membrane. It carries out the reaction GTP + H2O = GDP + phosphate + H(+). Its activity is regulated as follows. Alternates between an inactive form bound to GDP and an active form bound to GTP. Activated by a guanine nucleotide-exchange factor (GEF) and inactivated by a GTPase-activating protein (GAP). In terms of biological role, ras proteins bind GDP/GTP and possess intrinsic GTPase activity. Plays a role in eye development by regulating cell growth, survival of postmitotic ommatidial cells and differentiation of photoreceptor cells. During larval development, mediates Ptth/tor signaling leading to the production of ecdysone, a hormone required for the initiation of metamorphosis. This Drosophila persimilis (Fruit fly) protein is Ras-like protein 1.